Reading from the N-terminus, the 351-residue chain is Divinyl chlorophyll a/b light-harvesting protein PcbC (351 aa).

A run of 6 helical transmembrane segments spans residues F27–L47, G81–V101, F140–A160, V202–A222, A242–C262, and L309–L329.

Belongs to the PsbB/PsbC family. IsiA/Pcb subfamily. As to quaternary structure, the antenna complex consists of divinyl chlorophylls (a and b) and divinyl chlorophyll a/b binding proteins and binds more divinyl chlorophyll b than does the antenna complex from high-light-adapted Prochlorococcus. Divinyl chlorophyll a is required as a cofactor. The cofactor is divinyl chlorophyll b.

It localises to the cellular thylakoid membrane. The antenna complex functions as a light receptor, it captures and delivers excitation energy to photosystems II and I. The Prochlorales pcb genes are not related to higher plant LHCs. This is Divinyl chlorophyll a/b light-harvesting protein PcbC (pcbC) from Prochlorococcus marinus (strain NATL2A).